Here is a 616-residue protein sequence, read N- to C-terminus: ATP-dependent zinc metalloprotease FtsH 3 (616 aa).

Residues 1-9 (MSKNNKKWR) are Cytoplasmic-facing. Residues 10 to 30 (NAGLYALLLIVVLALASAFFD) traverse the membrane as a helical segment. The Lumenal portion of the chain corresponds to 31–108 (RPTQTRETLS…VQPQSDEGFW (78 aa)). Residues 109–129 (FRIASTLFLPILLLVGIFFLF) traverse the membrane as a helical segment. Topologically, residues 130–616 (RRAQSGPGSQ…NNNAKLALLV (487 aa)) are cytoplasmic. Residue 201 to 208 (GPPGTGKT) participates in ATP binding. Position 423 (His423) interacts with Zn(2+). The active site involves Glu424. The Zn(2+) site is built by His427 and Asp504.

In the central section; belongs to the AAA ATPase family. This sequence in the C-terminal section; belongs to the peptidase M41 family. As to quaternary structure, homohexamer (Potential). Part of a large complex that includes FtsH2 and PSII. Coimmunoprecipitates with YidC. The cofactor is Zn(2+).

It localises to the cellular thylakoid membrane. Functionally, acts as a processive, ATP-dependent zinc metallopeptidase for both cytoplasmic and membrane proteins. Plays a role in the quality control of integral membrane proteins. The protein is ATP-dependent zinc metalloprotease FtsH 3 of Synechocystis sp. (strain ATCC 27184 / PCC 6803 / Kazusa).